A 503-amino-acid chain; its full sequence is Cardiolipin synthase (503 aa).

3 consecutive transmembrane segments (helical) span residues 5-25 (LNVLLFLLILSTGLYLTRSFW), 29-49 (IVGAFSVLITITVVFIGIVIF), and 59-79 (LTWLMVLAVFPVVGFIFYLMF). PLD phosphodiesterase domains follow at residues 238 to 265 (INYRNHRKIIVIDGTVGFVGGLNIGDEY) and 416 to 443 (TRGFLHSKIIIVDNEIASIGTSNMDMRS). Active-site residues include His243, Lys245, Asp250, His421, Lys423, and Asp428.

The protein belongs to the phospholipase D family. Cardiolipin synthase subfamily.

It is found in the cell membrane. The enzyme catalyses 2 a 1,2-diacyl-sn-glycero-3-phospho-(1'-sn-glycerol) = a cardiolipin + glycerol. In terms of biological role, catalyzes the reversible phosphatidyl group transfer from one phosphatidylglycerol molecule to another to form cardiolipin (CL) (diphosphatidylglycerol) and glycerol. The sequence is that of Cardiolipin synthase (cls) from Halalkalibacterium halodurans (strain ATCC BAA-125 / DSM 18197 / FERM 7344 / JCM 9153 / C-125) (Bacillus halodurans).